A 322-amino-acid chain; its full sequence is tRNA dimethylallyltransferase (322 aa).

19 to 26 (GPTASGKT) lines the ATP pocket. Residue 21 to 26 (TASGKT) participates in substrate binding. 3 interaction with substrate tRNA regions span residues 44 to 47 (DSAL), 168 to 172 (QRIQR), and 255 to 260 (RCVGYR).

The protein belongs to the IPP transferase family. In terms of assembly, monomer. The cofactor is Mg(2+).

It carries out the reaction adenosine(37) in tRNA + dimethylallyl diphosphate = N(6)-dimethylallyladenosine(37) in tRNA + diphosphate. Its function is as follows. Catalyzes the transfer of a dimethylallyl group onto the adenine at position 37 in tRNAs that read codons beginning with uridine, leading to the formation of N6-(dimethylallyl)adenosine (i(6)A). The sequence is that of tRNA dimethylallyltransferase from Cupriavidus taiwanensis (strain DSM 17343 / BCRC 17206 / CCUG 44338 / CIP 107171 / LMG 19424 / R1) (Ralstonia taiwanensis (strain LMG 19424)).